We begin with the raw amino-acid sequence, 295 residues long: MTDLITVKKLGSRIGAQIDGVRLGGDLDPAAVNEIRAALLAHKVVFFRGQHQLDDAEQLAFAGLLGTPIGHPAAIALADDAPIITPINSEFGKANRWHTDVTFAANYPAASVLRAVSLPSYGGSTLWANTAAAYAELPEPLKCLTENLWALHTNRYDYVTTKPLTAAQRAFRQVFEKPDFRTEHPVVRVHPETGERTLLAGDFVRSFVGLDSHESRVLFEVLQRRITMPENTIRWNWAPGDVAIWDNRATQHRAIDDYDDQHRLMHRVTLMGDVPVDVYGQASRVISGAPMEIAG.

Residue His-71 participates in substrate binding. Fe cation is bound by residues His-98 and Asp-100. Val-101 contributes to the substrate binding site. Thr-125 is a binding site for 2-oxoglutarate. His-252 serves as a coordination point for Fe cation. Residues Arg-263 and Arg-267 each coordinate 2-oxoglutarate.

This sequence belongs to the TfdA dioxygenase family. Fe(2+) serves as cofactor.

It catalyses the reaction a primary linear alkyl sulfate ester + 2-oxoglutarate + O2 = an aldehyde + sulfate + succinate + CO2 + H(+). It carries out the reaction 2-ethylhexyl sulfate + 2-oxoglutarate + O2 = 2-ethylhexanal + sulfate + succinate + CO2 + H(+). The catalysed reaction is hexyl sulfate + 2-oxoglutarate + O2 = hexanal + sulfate + succinate + CO2 + H(+). The enzyme catalyses pentyl sulfate + 2-oxoglutarate + O2 = pentanal + sulfate + succinate + CO2 + H(+). It catalyses the reaction heptyl sulfate + 2-oxoglutarate + O2 = heptanal + sulfate + succinate + CO2 + H(+). Alpha-ketoglutarate-dependent sulfate ester dioxygenase, which oxidizes medium-chain alkyl-sulfate esters. Shows preference for 2-ethylhexyl sulfate (2-EHS) in vitro, leading to the formation of succinate and 2-ethylhexanal. Has likely a role in sulfate scavenging in vivo. Its function is as follows. Also causes the inactivation of the 2-carboxyquinoxaline Ty38c (an antitubercular compound that inhibits DprE1) via oxidative decarboxylation, using Ty38c instead of alpha-ketoglutarate as a substrate. Is thus responsible for primary resistance of M.tuberculosis to Ty38c in vitro. Overexpression of Rv3406 causes resistance to Ty38c. The polypeptide is Alpha-ketoglutarate-dependent sulfate ester dioxygenase (Mycobacterium tuberculosis (strain ATCC 25618 / H37Rv)).